We begin with the raw amino-acid sequence, 311 residues long: Putative ribose-phosphate pyrophosphokinase 2 (311 aa).

Residues 38–40 (DGE) and 97–98 (RQ) each bind ATP. Histidine 131 and aspartate 171 together coordinate Mg(2+). Residue aspartate 219 coordinates D-ribose 5-phosphate.

The protein belongs to the ribose-phosphate pyrophosphokinase family. Class I subfamily. Homohexamer. The cofactor is Mg(2+).

It localises to the cytoplasm. It carries out the reaction D-ribose 5-phosphate + ATP = 5-phospho-alpha-D-ribose 1-diphosphate + AMP + H(+). Its pathway is metabolic intermediate biosynthesis; 5-phospho-alpha-D-ribose 1-diphosphate biosynthesis; 5-phospho-alpha-D-ribose 1-diphosphate from D-ribose 5-phosphate (route I): step 1/1. Involved in the biosynthesis of the central metabolite phospho-alpha-D-ribosyl-1-pyrophosphate (PRPP) via the transfer of pyrophosphoryl group from ATP to 1-hydroxyl of ribose-5-phosphate (Rib-5-P). The polypeptide is Putative ribose-phosphate pyrophosphokinase 2 (Listeria monocytogenes serotype 4b (strain F2365)).